We begin with the raw amino-acid sequence, 102 residues long: Small ribosomal subunit protein uS10 (102 aa).

Belongs to the universal ribosomal protein uS10 family. In terms of assembly, part of the 30S ribosomal subunit.

Functionally, involved in the binding of tRNA to the ribosomes. The chain is Small ribosomal subunit protein uS10 from Streptococcus sanguinis (strain SK36).